The sequence spans 627 residues: Membrane protein insertase YidC (627 aa).

A helical membrane pass occupies residues 8–28 (LFLALILSMGIWMGVNYFFFP). A compositionally biased stretch (polar residues) spans 33-57 (KKNTETKQTQSDKTSENTKQQITSG). The interval 33–68 (KKNTETKQTQSDKTSENTKQQITSGKTKESNSADPV) is disordered. Over residues 58-68 (KTKESNSADPV) the composition is skewed to basic and acidic residues. 4 consecutive transmembrane segments (helical) span residues 417–437 (FTIPNYGWSIIIFAILFKLVF), 488–508 (VGGCLPMVIQIPIFIALYTAF), 536–556 (AIPYFTQTGIGLNLLALLMVG), and 575–595 (MLMYVMPVMMLYIFWNMPSGV).

It belongs to the OXA1/ALB3/YidC family. Type 1 subfamily. Interacts with the Sec translocase complex via SecD. Specifically interacts with transmembrane segments of nascent integral membrane proteins during membrane integration.

It is found in the cell inner membrane. Its function is as follows. Required for the insertion and/or proper folding and/or complex formation of integral membrane proteins into the membrane. Involved in integration of membrane proteins that insert both dependently and independently of the Sec translocase complex, as well as at least some lipoproteins. Aids folding of multispanning membrane proteins. The chain is Membrane protein insertase YidC from Leptospira interrogans serogroup Icterohaemorrhagiae serovar copenhageni (strain Fiocruz L1-130).